We begin with the raw amino-acid sequence, 445 residues long: Polyadenylate-binding protein RBP47A (445 aa).

Residues 1–12 (MQTPNNNGSTDS) show a composition bias toward polar residues. 2 disordered regions span residues 1 to 45 (MQTP…WQQQ) and 93 to 117 (AAYQ…GGDD). Over residues 22–35 (TPPPPLQQSTPPPQ) the composition is skewed to pro residues. Low complexity-rich tracts occupy residues 36-45 (QQQQQQWQQQ) and 93-108 (AAYQ…SQQQ). 3 consecutive RRM domains span residues 119–199 (KTLW…WASF), 213–292 (LSIF…IATP), and 327–399 (STIF…WGRS).

It belongs to the polyadenylate-binding RBP47 family. As to quaternary structure, interacts with the poly(A) tail of mRNA in nucleus. In terms of tissue distribution, expressed in leaves, stems, flowers, and seedlings.

Its subcellular location is the nucleus. It is found in the cytoplasmic granule. Functionally, heterogeneous nuclear ribonucleoprotein (hnRNP)-protein binding the poly(A) tail of mRNA and probably involved in some steps of pre-mRNA maturation. This is Polyadenylate-binding protein RBP47A (RBP47A) from Arabidopsis thaliana (Mouse-ear cress).